Here is a 523-residue protein sequence, read N- to C-terminus: Volkensin (523 aa).

Catalysis depends on residues Tyr-74, Tyr-113, Glu-162, and Arg-165. 111–113 (GGY) lines the AMP pocket. Intrachain disulfides connect Cys-245–Cys-269 and Cys-285–Cys-304. Residues 251-265 (QSDSPLVIRSFVDRN) constitute a propeptide, linker peptide. The Ricin B-type lectin 1 domain maps to 270–397 (PSGETTAFIV…YAASQAWRVT (128 aa)). A carbohydrate contacts are provided by residues 287–291 (DVKVE), Gln-300, Lys-305, and Asn-311. Cys-328 and Cys-343 form a disulfide bridge. The a carbohydrate site is built by Asn-358 and Asn-398. Residues Asn-358 and Asn-398 are each glycosylated (N-linked (GlcNAc...) asparagine). In terms of domain architecture, Ricin B-type lectin 2 spans 400 to 523 (TVPTVTTIVG…HGNSNQQWFL (124 aa)). Cystine bridges form between Cys-414–Cys-427 and Cys-453–Cys-471.

The protein in the N-terminal section; belongs to the ribosome-inactivating protein family. Type 2 RIP subfamily. In terms of assembly, disulfide-linked dimer of A and B chains. In terms of processing, N-glycosylated. Contains mannose and galactose. Expressed in roots (at protein level). Expressed in seeds (at protein level).

It carries out the reaction Endohydrolysis of the N-glycosidic bond at one specific adenosine on the 28S rRNA.. Its activity is regulated as follows. Hemagglutinating activity is inhibited by galactose and structurally related sugars. Its function is as follows. Has N-glycosidase activity and is responsible for inhibiting protein synthesis through the catalytic inactivation of 60S ribosomal subunits by removing a specific adenine of 28S rRNA. Inhibits GTP-dependent binding of EF2 (elongation factor 2) to ribosomes. In terms of biological role, binds to cell receptors and probably facilitates the entry into the cell of the A chain. Also acts as a galactose-specific lectin responsible for cell agglutination. The sequence is that of Volkensin from Adenia volkensii (Kilyambiti plant).